A 410-amino-acid chain; its full sequence is LL-diaminopimelate aminotransferase (410 aa).

2 residues coordinate substrate: Tyr15 and Gly42. Pyridoxal 5'-phosphate is bound by residues Tyr72, 108-109 (SK), Tyr132, Asn187, Tyr218, and 246-248 (SFS). Substrate contacts are provided by Lys109, Tyr132, and Asn187. The residue at position 249 (Lys249) is an N6-(pyridoxal phosphate)lysine. Residues Arg257 and Asn292 each coordinate pyridoxal 5'-phosphate. Positions 292 and 388 each coordinate substrate.

The protein belongs to the class-I pyridoxal-phosphate-dependent aminotransferase family. LL-diaminopimelate aminotransferase subfamily. In terms of assembly, homodimer. Requires pyridoxal 5'-phosphate as cofactor.

The catalysed reaction is (2S,6S)-2,6-diaminopimelate + 2-oxoglutarate = (S)-2,3,4,5-tetrahydrodipicolinate + L-glutamate + H2O + H(+). It participates in amino-acid biosynthesis; L-lysine biosynthesis via DAP pathway; LL-2,6-diaminopimelate from (S)-tetrahydrodipicolinate (aminotransferase route): step 1/1. Functionally, involved in the synthesis of meso-diaminopimelate (m-DAP or DL-DAP), required for both lysine and peptidoglycan biosynthesis. Catalyzes the direct conversion of tetrahydrodipicolinate to LL-diaminopimelate. This is LL-diaminopimelate aminotransferase from Geobacter sulfurreducens (strain ATCC 51573 / DSM 12127 / PCA).